The sequence spans 852 residues: Phenylalanine--tRNA ligase beta subunit (852 aa).

Residues 44-159 enclose the tRNA-binding domain; the sequence is PETTGPLVIG…DADLASANLK (116 aa). One can recognise a B5 domain in the interval 428-510; the sequence is PEMPMITIHT…RLEGLEDIPS (83 aa). Positions 488, 494, 497, and 498 each coordinate Mg(2+). An FDX-ACB domain is found at 758-851; sequence SAFPAVLQDI…ATEKVGAQLR (94 aa).

It belongs to the phenylalanyl-tRNA synthetase beta subunit family. Type 1 subfamily. Tetramer of two alpha and two beta subunits. It depends on Mg(2+) as a cofactor.

Its subcellular location is the cytoplasm. The catalysed reaction is tRNA(Phe) + L-phenylalanine + ATP = L-phenylalanyl-tRNA(Phe) + AMP + diphosphate + H(+). This Corynebacterium jeikeium (strain K411) protein is Phenylalanine--tRNA ligase beta subunit.